A 150-amino-acid chain; its full sequence is MLAQFYVNLVVLLVLLICGLLSQNAAVTIAAGVLIVIKITPLNQFFPYIQAHGLNLGILILTIGVLTPIASGKLSGESILKSFISFKSLVAIAIGLLVAWLGGRGVKLMSSQPDVVAGLLIGTVAGVALLRGVPVGPLIAAGLLSLFIGK.

4 consecutive transmembrane segments (helical) span residues 1 to 21 (MLAQ…CGLL), 45 to 65 (FFPY…TIGV), 83 to 103 (FISF…WLGG), and 115 to 135 (VVAG…GVPV).

Belongs to the UPF0756 family.

Its subcellular location is the cell membrane. This is UPF0756 membrane protein ACICU_02320 from Acinetobacter baumannii (strain ACICU).